The sequence spans 182 residues: Isopentenyl-diphosphate Delta-isomerase (182 aa).

The Mn(2+) site is built by histidine 25 and histidine 32. The active site involves cysteine 67. Histidine 69 is a binding site for Mn(2+). Glutamate 87 contacts Mg(2+). Residues glutamate 114 and glutamate 116 each contribute to the Mn(2+) site. Residue glutamate 116 is part of the active site.

It belongs to the IPP isomerase type 1 family. In terms of assembly, homodimer. Requires Mg(2+) as cofactor. Mn(2+) serves as cofactor.

The protein localises to the cytoplasm. The enzyme catalyses isopentenyl diphosphate = dimethylallyl diphosphate. It functions in the pathway isoprenoid biosynthesis; dimethylallyl diphosphate biosynthesis; dimethylallyl diphosphate from isopentenyl diphosphate: step 1/1. Its function is as follows. Catalyzes the 1,3-allylic rearrangement of the homoallylic substrate isopentenyl (IPP) to its highly electrophilic allylic isomer, dimethylallyl diphosphate (DMAPP). In Escherichia coli (strain K12 / MC4100 / BW2952), this protein is Isopentenyl-diphosphate Delta-isomerase.